Here is a 638-residue protein sequence, read N- to C-terminus: Neuroendocrine convertase 2 (638 aa).

The signal sequence occupies residues 1–25 (MKGGCVSQWKAAAGFLFCVMVFASA). Residues 26–109 (ERPVFTNHFL…QQEGFDRKKR (84 aa)) constitute a propeptide that is removed on maturation. The Peptidase S8 domain maps to 129 to 453 (QWYLINTGQA…YGVLDAGAMV (325 aa)). Catalysis depends on charge relay system residues D167 and H208. 2 disulfide bridges follow: C225–C376 and C317–C347. N375 carries N-linked (GlcNAc...) asparagine glycosylation. Catalysis depends on S384, which acts as the Charge relay system. The 137-residue stretch at 461–597 (TVPERFHCVG…TLMLHGTQSA (137 aa)) folds into the P/Homo B domain. A disulfide bridge connects residues C468 and C494. N-linked (GlcNAc...) asparagine glycosylation is found at N514 and N524.

The protein belongs to the peptidase S8 family. Furin subfamily.

The protein resides in the cytoplasmic vesicle. It is found in the secretory vesicle. Its subcellular location is the secreted. It carries out the reaction Release of protein hormones and neuropeptides from their precursors, generally by hydrolysis of -Lys-Arg-|- bonds.. Functionally, serine endopeptidase which is involved in the processing of hormone and other protein precursors at sites comprised of pairs of basic amino acid residues. Responsible for the release of glucagon from proglucagon in pancreatic A cells. The polypeptide is Neuroendocrine convertase 2 (PCSK2) (Pongo abelii (Sumatran orangutan)).